The primary structure comprises 599 residues: Beta-myrcene synthase, chloroplastic (599 aa).

A chloroplast-targeting transit peptide spans 1-34; the sequence is MWSTISISMNVAILKKPLNFLHNSNNKASNPRCV. 5 residues coordinate Mg(2+): aspartate 352, aspartate 356, aspartate 496, threonine 500, and glutamate 504. Residues 352–356 carry the DDXXD motif motif; the sequence is DDVYD.

The protein belongs to the terpene synthase family. It depends on Mg(2+) as a cofactor. The cofactor is Mn(2+).

The protein resides in the plastid. It is found in the chloroplast. It carries out the reaction (2E)-geranyl diphosphate = beta-myrcene + diphosphate. The protein operates within secondary metabolite biosynthesis; terpenoid biosynthesis. Its function is as follows. Monoterpene synthase that catalyzes the formation of beta-myrcene from geranyl diphosphate. In Ocimum basilicum (Sweet basil), this protein is Beta-myrcene synthase, chloroplastic (MYS).